Reading from the N-terminus, the 262-residue chain is Catechol O-methyltransferase domain-containing protein 1 (262 aa).

The chain crosses the membrane as a helical; Signal-anchor for type II membrane protein span at residues 12–32; sequence AALALGSAALGAAFATGLLLG. S-adenosyl-L-methionine contacts are provided by residues D108, 110 to 111, S116, E134, V135, A163, D185, D187, and Y194; that span reads GT.

This sequence belongs to the class I-like SAM-binding methyltransferase superfamily. Cation-dependent O-methyltransferase family. As to quaternary structure, homodimer.

It localises to the membrane. Functionally, putative O-methyltransferase. The sequence is that of Catechol O-methyltransferase domain-containing protein 1 (Comtd1) from Mus musculus (Mouse).